The sequence spans 331 residues: UPF0284 protein PF0303 (331 aa).

It belongs to the UPF0284 family.

This Pyrococcus furiosus (strain ATCC 43587 / DSM 3638 / JCM 8422 / Vc1) protein is UPF0284 protein PF0303.